Reading from the N-terminus, the 161-residue chain is RNA pyrophosphohydrolase (161 aa).

The Nudix hydrolase domain maps to 9–155 (PYRPCVGVML…KRRVYRQVVD (147 aa)). Positions 44–65 (GGIDDGEELHPAALRELSEETG) match the Nudix box motif.

The protein belongs to the Nudix hydrolase family. RppH subfamily. Requires a divalent metal cation as cofactor.

In terms of biological role, accelerates the degradation of transcripts by removing pyrophosphate from the 5'-end of triphosphorylated RNA, leading to a more labile monophosphorylated state that can stimulate subsequent ribonuclease cleavage. In Novosphingobium aromaticivorans (strain ATCC 700278 / DSM 12444 / CCUG 56034 / CIP 105152 / NBRC 16084 / F199), this protein is RNA pyrophosphohydrolase.